We begin with the raw amino-acid sequence, 84 residues long: Small ribosomal subunit protein bS20 (84 aa).

The protein belongs to the bacterial ribosomal protein bS20 family.

Binds directly to 16S ribosomal RNA. This chain is Small ribosomal subunit protein bS20, found in Parabacteroides distasonis (strain ATCC 8503 / DSM 20701 / CIP 104284 / JCM 5825 / NCTC 11152).